Reading from the N-terminus, the 585-residue chain is Zinc finger protein Eos (585 aa).

2 disordered regions span residues Met1–Leu43 and Glu68–Ser98. The span at Gln25 to Pro34 shows a compositional bias: basic and acidic residues. A compositionally biased stretch (polar residues) spans Ser79–Ser98. Lys100 participates in a covalent cross-link: Glycyl lysine isopeptide (Lys-Gly) (interchain with G-Cter in SUMO2). Position 105 is a phosphoserine (Ser105). 4 C2H2-type zinc fingers span residues Leu159–His181, Phe187–His209, Phe215–His237, and Tyr248–His271. Residues Ala281–Gly585 are interaction with FOXP3. The residue at position 335 (Lys335) is an N6-acetyllysine. The interval Pro410 to Arg489 is disordered. The CTBP-binding motif PEDLA signature appears at Pro425–Ala429. Over residues Gln475 to Thr484 the composition is skewed to pro residues. Lys500 is covalently cross-linked (Glycyl lysine isopeptide (Lys-Gly) (interchain with G-Cter in SUMO2)). 2 C2H2-type zinc fingers span residues Phe530–His552 and Phe558–His582.

This sequence belongs to the Ikaros C2H2-type zinc-finger protein family. Self-associates. Interacts with other family members; IKZF1, IKZF2, IKZF3 and IKZF5. Interacts with CTBP2. Interacts with SPI1, MITF, FOXP3 and CTBP1. Highly expressed in skeletal muscle, low levels of expression in heart, thymus, kidney, liver, and spleen. Expressed in the hematopoietic cell lines MOLT-4, NALM-6 and K-562. Highly expressed in THP-1 and M-07e cell lines, which have characteristics of myeloid and early megakaryocytic cells respectively.

It localises to the nucleus. Functionally, DNA-binding protein that binds to the 5'GGGAATRCC-3' Ikaros-binding sequence. Transcriptional repressor. Interacts with SPI1 and MITF to repress transcription of the CTSK and ACP5 promoters via recruitment of corepressors SIN3A and CTBP2. May be involved in the development of central and peripheral nervous systems. Essential for the inhibitory function of regulatory T-cells (Treg). Mediates FOXP3-mediated gene silencing in regulatory T-cells (Treg) via recruitment of corepressor CTBP1. In Homo sapiens (Human), this protein is Zinc finger protein Eos (IKZF4).